The following is a 657-amino-acid chain: Serine/threonine-protein kinase BUR1 (657 aa).

In terms of domain architecture, Protein kinase spans 60 to 366; sequence YREDEKLGQG…AMSAKHHPWF (307 aa). ATP contacts are provided by residues 66–74 and Lys-89; that span reads LGQGTFGEV. Asp-195 acts as the Proton acceptor in catalysis. The residue at position 240 (Thr-240) is a Phosphothreonine; by CAK. Position 400 is a phosphoserine (Ser-400). Thr-405 carries the phosphothreonine modification. The tract at residues 414–657 is disordered; it reads KGESPVVKNL…FQNSDIADLY (244 aa). Residue Ser-417 is modified to Phosphoserine. The segment covering 489 to 501 has biased composition (low complexity); the sequence is NNSSRNNRFSGNS. Polar residues-rich tracts occupy residues 535 to 552, 564 to 595, and 614 to 625; these read SRYQGNSNESRYKNSPND, PETNFNRQPQKYSRQESNAPINKNYNPSNGSR, and ISPSQGQHQLTS. The span at 627-649 shows a compositional bias: basic and acidic residues; it reads PIEKKNGSFKDERAKPDESKEFQ. At Ser-634 the chain carries Phosphoserine.

This sequence belongs to the protein kinase superfamily. CMGC Ser/Thr protein kinase family. CDC2/CDKX subfamily. Belongs to the BUR kinase complex composed of SGV1/BUR1 and BUR2. Interacts with BUR2 and RBP1.

The protein resides in the nucleus. The enzyme catalyses L-seryl-[protein] + ATP = O-phospho-L-seryl-[protein] + ADP + H(+). It carries out the reaction L-threonyl-[protein] + ATP = O-phospho-L-threonyl-[protein] + ADP + H(+). The catalysed reaction is [DNA-directed RNA polymerase] + ATP = phospho-[DNA-directed RNA polymerase] + ADP + H(+). Serine/threonine-protein kinase component of the BUR kinase complex involved in transcription regulation. This complex phosphorylates 'Ser-120' of the UBC2/RAD6 ubiquitin-conjugating enzyme (E2), leading to monoubiquitination of histone H2B, the localization of the PAF1 complex to the chromatin, and the silencing of telomeric-associated genes. Also required for histone H3 'Lys-4' trimethylation. May phosphorylate the 'Ser-5' of the RBP1 carboxy-terminal domain (CTD) repeats. Necessary for the recovery from pheromone-induced growth arrest in the cell cycle G1 phase. The kinase activity of the complex requires the presence of BUR2. The sequence is that of Serine/threonine-protein kinase BUR1 (SGV1) from Saccharomyces cerevisiae (strain ATCC 204508 / S288c) (Baker's yeast).